A 1545-amino-acid polypeptide reads, in one-letter code: Dual oxidase 2 (1545 aa).

The first 25 residues, 1 to 25 (MLCIRPEALVLLGALLTVPLDPVGG), serve as a signal peptide directing secretion. At 26–601 (QDALSLTWEV…EGSGPGFGIT (576 aa)) the chain is on the extracellular side. The tract at residues 30–596 (SLTWEVQRYD…VIQYFEGSGP (567 aa)) is peroxidase-like; mediates peroxidase activity. N-linked (GlcNAc...) asparagine glycans are attached at residues asparagine 100, asparagine 312, asparagine 348, asparagine 358, asparagine 455, and asparagine 549. Cysteines 124 and 1159 form a disulfide. The helical transmembrane segment at 602–622 (IVALCCLPLMSLLISGVVAYF) threads the bilayer. The Cytoplasmic portion of the chain corresponds to 623 to 1037 (RSRERKKLQK…YKRFVENYRR (415 aa)). 3 EF-hand domains span residues 819–854 (PQDMFVESMFSLADKDGNGYLSFREFLDVLVVFMKG), 855–890 (SPEDKSRLMFTMYDLDGNGFLSKDEFFTMIRSFIEI), and 899–934 (QLTEVVESMFREAGFQDKQELTWEDFHFMLRDHDSE). Ca(2+) contacts are provided by aspartate 832, aspartate 834, asparagine 836, tyrosine 838, glutamate 843, aspartate 868, aspartate 870, asparagine 872, and glutamate 879. The tract at residues 960-1242 (RVSFIIRTPE…GSFALIQLPR (283 aa)) is interaction with TXNDC11. A helical transmembrane segment spans residues 1038-1058 (HIVCVAIFSAICAGLFVERAY). Over 1059–1074 (YYAFVSPPSGIAETTF) the chain is Extracellular. A helical membrane pass occupies residues 1075–1097 (VGIILSRGTAASVSFMFSYILLT). Residues 1081 to 1263 (RGTAASVSFM…YVGDKLVSLS (183 aa)) form the Ferric oxidoreductase domain. The Cytoplasmic portion of the chain corresponds to 1098–1125 (MCRNLITFLRETFLNHYVPFDAAVDFHR). The helical transmembrane segment at 1126–1148 (WIAMAALVLAILHSVGHVVNVYI) threads the bilayer. The Extracellular portion of the chain corresponds to 1149–1182 (FSVSPLSLLACVFPSVFVNDGSKLPQKFYWWFFQ). A helical membrane pass occupies residues 1183–1203 (TIPGMTGVLLLVVLAIMYVFA). Over 1204–1220 (SPYFRRRSFRGFWLTHH) the chain is Cytoplasmic. Residues 1221–1241 (FYILLYVLLIIHGSFALIQLP) traverse the membrane as a helical segment. Residue arginine 1242 is a topological domain, extracellular. A helical transmembrane segment spans residues 1243–1263 (FHIFFLVPALIYVGDKLVSLS). Positions 1264–1370 (RKKVEISVVK…DGPFGEGHQE (107 aa)) constitute an FAD-binding FR-type domain. Over 1264 to 1545 (RKKVEISVVK…THFVHHYENF (282 aa)) the chain is Cytoplasmic.

It in the N-terminal section; belongs to the peroxidase family. As to quaternary structure, heterodimer with DUOXA2; disulfide-linked. Interacts with TXNDC11, TPO and CYBA. Post-translationally, N-glycosylated. As to expression, expressed in thyroid, and the digestive tract especially in stomach, cecum and sigmoidal colon (at protein level). Expressed in thyroid.

It localises to the apical cell membrane. The protein resides in the cell junction. It carries out the reaction NADH + O2 + H(+) = H2O2 + NAD(+). It catalyses the reaction NADPH + O2 + H(+) = H2O2 + NADP(+). Its pathway is hormone biosynthesis; thyroid hormone biosynthesis. With respect to regulation, the NADPH oxidase activity is calcium-dependent. Peroxidase activity is inhibited by aminobenzohydrazide. Its function is as follows. Generates hydrogen peroxide which is required for the activity of thyroid peroxidase/TPO and lactoperoxidase/LPO. Plays a role in thyroid hormones synthesis and lactoperoxidase-mediated antimicrobial defense at the surface of mucosa. May have its own peroxidase activity through its N-terminal peroxidase-like domain. The sequence is that of Dual oxidase 2 (DUOX2) from Sus scrofa (Pig).